The primary structure comprises 244 residues: Thiol S-methyltransferase TMT1B (244 aa).

The first 23 residues, 1 to 23, serve as a signal peptide directing secretion; the sequence is MDILVPLLQLLVLLLTLPLHLMA.

The protein belongs to the methyltransferase superfamily. As to expression, expressed in the liver.

It localises to the endoplasmic reticulum membrane. Its subcellular location is the lipid droplet. The protein resides in the microsome. It is found in the cytoplasm. The protein localises to the cytosol. The enzyme catalyses a thiol + S-adenosyl-L-methionine = a methyl thioether + S-adenosyl-L-homocysteine + H(+). Its function is as follows. Thiol S-methyltransferase that catalyzes the transfer of a methyl group from S-adenosyl-L-methionine to alkyl and phenolic thiol-containing acceptor substrates. Together with TMT1B accounts for most of S-thiol methylation activity in the endoplasmic reticulum of hepatocytes. Selectively methylates S-centered nucleophiles from metabolites such as hydrogen sulfide and dithiothreitol. In Homo sapiens (Human), this protein is Thiol S-methyltransferase TMT1B.